The primary structure comprises 311 residues: Glutaminase (311 aa).

Residues Ser-69, Asn-120, Glu-164, Asn-171, Tyr-195, Tyr-247, and Val-265 each contribute to the substrate site.

It belongs to the glutaminase family. In terms of assembly, homotetramer.

The catalysed reaction is L-glutamine + H2O = L-glutamate + NH4(+). The polypeptide is Glutaminase (Colwellia psychrerythraea (strain 34H / ATCC BAA-681) (Vibrio psychroerythus)).